A 104-amino-acid chain; its full sequence is Circadian clock oscillator protein KaiB (104 aa).

The protein belongs to the KaiB family. As to quaternary structure, the KaiABC complex composition changes during the circadian cycle to control KaiC phosphorylation. Complexes KaiC(6), KaiA(2-4):KaiC(6), KaiB(6):KaiC(6) and KaiC(6):KaiB(6):KaiA(12) are among the most important forms, many form cooperatively. Undergoes a major conformational rearrangment; in the free state forms homotetramers as a dimer of dimers. When bound to the CI domain of KaiC switches to a monomeric thioredoxin-fold (KaiB(fs)). KaiB(fs) binds CikA, leading it to dephosphorylate phospho-RpaA.

Functionally, key component of the KaiABC oscillator complex, which constitutes the main circadian regulator in cyanobacteria. Complex composition changes during the circadian cycle to control KaiC phosphorylation. KaiA stimulates KaiC autophosphorylation, while KaiB sequesters KaiA, leading to KaiC autodephosphorylation. Phospho-Ser-431 KaiC accumulation triggers binding of KaiB to form the KaiB(6):KaiC(6) complex, leading to changes in output regulators CikA and SasA. KaiB switches to a thioredoxin-like fold (KaiB(fs)) when bound to KaiC. KaiB(6):KaiC(6) formation exposes a site for KaiA binding that sequesters KaiA from KaiC, making the KaiC(6):KaiB(6):KaiA(12) complex that results in KaiC autodephosphorylation. A metamorphic protein which reversibly switches between an inactive tetrameric fold and a rare, thioredoxin-like monomeric fold (KaiB(fs)). KaiB(fs) binds phospho-KaiC, KaiA and CikA. KaiA and CikA compete for binding to KaiB(fs), and KaiB(fs) and SasA compete for binding to KaiC, thus the clock oscillator and output signal pathway are tightly coupled. The chain is Circadian clock oscillator protein KaiB from Nostoc punctiforme (strain ATCC 29133 / PCC 73102).